The chain runs to 687 residues: Translation initiation factor IF-2 (687 aa).

The tr-type G domain maps to 186 to 355; the sequence is KRPPIVTVMG…LLTAEMLELK (170 aa). The G1 stretch occupies residues 195 to 202; the sequence is GHVDHGKT. 195–202 serves as a coordination point for GTP; that stretch reads GHVDHGKT. A G2 region spans residues 220 to 224; it reads GITQH. Positions 241 to 244 are G3; sequence DTPG. GTP is bound by residues 241–245 and 295–298; these read DTPGH and NKID. Residues 295–298 are G4; the sequence is NKID. The tract at residues 331–333 is G5; the sequence is SAK.

The protein belongs to the TRAFAC class translation factor GTPase superfamily. Classic translation factor GTPase family. IF-2 subfamily.

The protein localises to the cytoplasm. One of the essential components for the initiation of protein synthesis. Protects formylmethionyl-tRNA from spontaneous hydrolysis and promotes its binding to the 30S ribosomal subunits. Also involved in the hydrolysis of GTP during the formation of the 70S ribosomal complex. This Clostridium botulinum (strain Alaska E43 / Type E3) protein is Translation initiation factor IF-2.